Reading from the N-terminus, the 288-residue chain is 4-hydroxybenzoate octaprenyltransferase (288 aa).

The next 8 helical transmembrane spans lie at 23-43 (IGSL…GKGI), 46-66 (TKIL…GCVV), 98-118 (ILFV…NSMT), 141-161 (LPQV…FAAV), 165-185 (LPLV…AYDT), 213-233 (LIIG…GWLM), 234-254 (NLGG…VHQQ), and 268-288 (AFLN…ISYL).

It belongs to the UbiA prenyltransferase family. The cofactor is Mg(2+).

Its subcellular location is the cell inner membrane. The enzyme catalyses all-trans-octaprenyl diphosphate + 4-hydroxybenzoate = 4-hydroxy-3-(all-trans-octaprenyl)benzoate + diphosphate. The protein operates within cofactor biosynthesis; ubiquinone biosynthesis. Catalyzes the prenylation of para-hydroxybenzoate (PHB) with an all-trans polyprenyl group. Mediates the second step in the final reaction sequence of ubiquinone-8 (UQ-8) biosynthesis, which is the condensation of the polyisoprenoid side chain with PHB, generating the first membrane-bound Q intermediate 3-octaprenyl-4-hydroxybenzoate. The polypeptide is 4-hydroxybenzoate octaprenyltransferase (Yersinia enterocolitica serotype O:8 / biotype 1B (strain NCTC 13174 / 8081)).